A 563-amino-acid chain; its full sequence is Rhotekin (563 aa).

At R14 the chain carries Omega-N-methylarginine. Positions 17–98 constitute an REM-1 domain; that stretch reads ALEMEFKRGR…LQRRKEAQVL (82 aa). S30 and S106 each carry phosphoserine. The disordered stretch occupies residues 96–116; that stretch reads QVLGKTSRRPSDSGPPAERSP. At R230 the chain carries Asymmetric dimethylarginine. S232 carries the phosphoserine modification. One can recognise a PH domain in the interval 309–416; the sequence is QPTASGTLRV…WMEALWQLFF (108 aa). The tract at residues 518-563 is disordered; the sequence is TFSLDAVPPDHSPRARSVAPLPPQRSPRTRGLCSKGQPRTWLQSPV. Phosphoserine is present on residues S520, S529, and S543.

In terms of assembly, interacts via its C-terminal region with the TAX1BP3 PDZ domain. This interaction facilitates Rho-mediated activation of the c-Fos serum response element (SRE). Interacts with SEPT9. Specifically binds to GTP-bound RHOA, RHOB and RHOC and inhibits their GTPase activity. In terms of tissue distribution, highly expressed in prostate, moderately in kidney, heart, brain, spleen, testis, placenta, small intestine, pancreas, skeletal muscle and peripheral blood leukocytes, and weakly in ovary, colon and thymus. Weakly expressed in all normal cell lines tested. Overexpressed in various cancer cell lines.

Its function is as follows. Mediates Rho signaling to activate NF-kappa-B and may confer increased resistance to apoptosis to cells in gastric tumorigenesis. May play a novel role in the organization of septin structures. This chain is Rhotekin, found in Homo sapiens (Human).